We begin with the raw amino-acid sequence, 141 residues long: MARRQTHTSKGPSQRQLRAGELVRHALVGIIAREEFRDPDLEGQMISVTEVRPSPDLRVAKVYVAPLGRGDSAKLAAGLNRCAAFLRGRLGREIEMKFTPELHFHADNSFDTASHVDDLLNRPTVRKDLDATRGSEADAED.

This sequence belongs to the RbfA family. In terms of assembly, monomer. Binds 30S ribosomal subunits, but not 50S ribosomal subunits or 70S ribosomes.

The protein localises to the cytoplasm. Functionally, one of several proteins that assist in the late maturation steps of the functional core of the 30S ribosomal subunit. Associates with free 30S ribosomal subunits (but not with 30S subunits that are part of 70S ribosomes or polysomes). Required for efficient processing of 16S rRNA. May interact with the 5'-terminal helix region of 16S rRNA. In Maricaulis maris (strain MCS10) (Caulobacter maris), this protein is Ribosome-binding factor A.